A 237-amino-acid polypeptide reads, in one-letter code: Bax inhibitor 1 (237 aa).

The Cytoplasmic portion of the chain corresponds to Met1 to Lys29. A Glycyl lysine isopeptide (Lys-Gly) (interchain with G-Cter in ubiquitin) cross-link involves residue Lys7. The helical transmembrane segment at Val30–Val50 threads the bilayer. Residues Thr51–Arg52 lie on the Lumenal side of the membrane. The helical transmembrane segment at Phe53 to Ala73 threads the bilayer. Over Thr74 to Gly86 the chain is Cytoplasmic. The chain crosses the membrane as a helical span at residues Leu87 to Ile107. Residues Ala108 to Ser112 are Lumenal-facing. The chain crosses the membrane as a helical span at residues Ile113 to Leu133. The Cytoplasmic portion of the chain corresponds to Tyr134–Ser139. A helical membrane pass occupies residues Tyr140–Gly160. At Asn161 to Ser166 the chain is on the lumenal side. The helical transmembrane segment at Ile167–Phe187 threads the bilayer. Over Asp188–His206 the chain is Cytoplasmic. The helical intramembrane region spans Cys207–Met227. At Asn228–Lys237 the chain is on the cytoplasmic side.

Belongs to the BI1 family. As to quaternary structure, interacts with BCL2 and BCL2L1. Interacts with ERN1. Post-translationally, ubiquitinated by BFAR, leading to proteasomal degradation.

The protein resides in the endoplasmic reticulum membrane. Endoplasmic reticulum (ER)-resident protein that confers cellular protection as an anti-apoptotic protein by limiting multiple stress-inducing pathways surrounding the endoplasmic reticulum and mitochondria. Inhibits the activities of the key sensor for the endoplasmic reticulum unfolded protein response IRE1alpha/ERN1 both directly and by blocking BAX/BAK binding. Modulates ER calcium homeostasis by acting as a calcium-leak channel. Negatively regulates autophagy and autophagosome formation, especially during periods of nutrient deprivation, and reduces cell survival during starvation. The protein is Bax inhibitor 1 (TMBIM6) of Sus scrofa (Pig).